Consider the following 211-residue polypeptide: Arginine exporter protein ArgO (211 aa).

Helical transmembrane passes span 1–21 (MISY…PLGP), 37–57 (LMIA…GIFG), 68–88 (LLAL…FGAL), 111–131 (IIAT…DTFV), 147–167 (WFAL…ALLA), and 179–199 (AQRI…FQLA).

This sequence belongs to the LysE/ArgO transporter (TC 2.A.75) family.

It localises to the cell inner membrane. The enzyme catalyses L-arginine(in) = L-arginine(out). Involved in the export of arginine. Important to control the intracellular level of arginine and the correct balance between arginine and lysine. This chain is Arginine exporter protein ArgO, found in Salmonella choleraesuis (strain SC-B67).